The sequence spans 354 residues: Dihydroorotate dehydrogenase (quinone) (354 aa).

Residues 61 to 65 (AGYDK) and Ala-85 contribute to the FMN site. Lys-65 is a binding site for substrate. Residue 110 to 114 (NRFGF) coordinates substrate. 2 residues coordinate FMN: Asn-139 and Asn-170. A substrate-binding site is contributed by Asn-170. Ser-173 acts as the Nucleophile in catalysis. Asn-175 provides a ligand contact to substrate. FMN contacts are provided by Lys-211 and Thr-239. Residue 240–241 (NT) coordinates substrate. FMN contacts are provided by residues Gly-261, Gly-290, and 311–312 (YT).

The protein belongs to the dihydroorotate dehydrogenase family. Type 2 subfamily. In terms of assembly, monomer. The cofactor is FMN.

The protein localises to the cell membrane. It carries out the reaction (S)-dihydroorotate + a quinone = orotate + a quinol. Its pathway is pyrimidine metabolism; UMP biosynthesis via de novo pathway; orotate from (S)-dihydroorotate (quinone route): step 1/1. Catalyzes the conversion of dihydroorotate to orotate with quinone as electron acceptor. This chain is Dihydroorotate dehydrogenase (quinone), found in Cereibacter sphaeroides (strain ATCC 17023 / DSM 158 / JCM 6121 / CCUG 31486 / LMG 2827 / NBRC 12203 / NCIMB 8253 / ATH 2.4.1.) (Rhodobacter sphaeroides).